The primary structure comprises 563 residues: Sulfite reductase [NADPH] hemoprotein beta-component (563 aa).

[4Fe-4S] cluster contacts are provided by C427, C433, C472, and C476. A siroheme-binding site is contributed by C476.

It belongs to the nitrite and sulfite reductase 4Fe-4S domain family. In terms of assembly, alpha(8)-beta(8). The alpha component is a flavoprotein, the beta component is a hemoprotein. Siroheme is required as a cofactor. Requires [4Fe-4S] cluster as cofactor.

The enzyme catalyses hydrogen sulfide + 3 NADP(+) + 3 H2O = sulfite + 3 NADPH + 4 H(+). It functions in the pathway sulfur metabolism; hydrogen sulfide biosynthesis; hydrogen sulfide from sulfite (NADPH route): step 1/1. In terms of biological role, component of the sulfite reductase complex that catalyzes the 6-electron reduction of sulfite to sulfide. This is one of several activities required for the biosynthesis of L-cysteine from sulfate. The protein is Sulfite reductase [NADPH] hemoprotein beta-component of Shewanella frigidimarina (strain NCIMB 400).